Here is a 334-residue protein sequence, read N- to C-terminus: Ribosomal RNA small subunit methyltransferase H (334 aa).

Residues 34–36 (GGY), D52, A87, D100, and Q107 each bind S-adenosyl-L-methionine.

Belongs to the methyltransferase superfamily. RsmH family.

Its subcellular location is the cytoplasm. It catalyses the reaction cytidine(1402) in 16S rRNA + S-adenosyl-L-methionine = N(4)-methylcytidine(1402) in 16S rRNA + S-adenosyl-L-homocysteine + H(+). Its function is as follows. Specifically methylates the N4 position of cytidine in position 1402 (C1402) of 16S rRNA. The chain is Ribosomal RNA small subunit methyltransferase H from Maricaulis maris (strain MCS10) (Caulobacter maris).